A 102-amino-acid chain; its full sequence is Small ribosomal subunit protein uS10 (102 aa).

It belongs to the universal ribosomal protein uS10 family. In terms of assembly, part of the 30S ribosomal subunit.

Involved in the binding of tRNA to the ribosomes. This Streptococcus thermophilus (strain ATCC BAA-491 / LMD-9) protein is Small ribosomal subunit protein uS10.